A 325-amino-acid chain; its full sequence is 5-dehydro-2-deoxygluconokinase (325 aa).

This sequence belongs to the carbohydrate kinase PfkB family.

The catalysed reaction is 5-dehydro-2-deoxy-D-gluconate + ATP = 6-phospho-5-dehydro-2-deoxy-D-gluconate + ADP + H(+). The protein operates within polyol metabolism; myo-inositol degradation into acetyl-CoA; acetyl-CoA from myo-inositol: step 5/7. In terms of biological role, catalyzes the phosphorylation of 5-dehydro-2-deoxy-D-gluconate (2-deoxy-5-keto-D-gluconate or DKG) to 6-phospho-5-dehydro-2-deoxy-D-gluconate (DKGP). The chain is 5-dehydro-2-deoxygluconokinase from Bacillus licheniformis (strain ATCC 14580 / DSM 13 / JCM 2505 / CCUG 7422 / NBRC 12200 / NCIMB 9375 / NCTC 10341 / NRRL NRS-1264 / Gibson 46).